Here is an 832-residue protein sequence, read N- to C-terminus: SID1 transmembrane family member 2 (832 aa).

A signal peptide spans 1-15; sequence MIAWRLPLCVLLVAA. At 16-293 the chain is on the extracellular side; sequence VESHLGALGP…VSQAVTSEAY (278 aa). N-linked (GlcNAc...) asparagine glycans are attached at residues Asn-27, Asn-54, Asn-60, Asn-123, Asn-141, and Asn-165. Residues 294–314 traverse the membrane as a helical segment; it reads VGGMLFCLGIFLSFYLLTVLL. Topologically, residues 315–447 are cytoplasmic; it reads ACWENWRQRK…DKRVLRKKYQ (133 aa). Phosphoserine is present on residues Ser-401, Ser-403, and Ser-404. The helical transmembrane segment at 448–468 threads the bilayer; that stretch reads IYFWNIATIAVFYALPVVQLV. Over 469–499 the chain is Extracellular; sequence ITYQTVVNVTGNQDICYYNFLCAHPLGNLSA. Asn-476 and Asn-496 each carry an N-linked (GlcNAc...) asparagine glycan. A helical membrane pass occupies residues 500–520; it reads FNNILSNLGYILLGLLFLLII. The Cytoplasmic portion of the chain corresponds to 521–546; that stretch reads LQREINHNRALLRNDLYALECGIPKH. Residues 547-567 traverse the membrane as a helical segment; the sequence is FGLFYAMGTALMMEGLLSACY. Residues 568-605 lie on the Extracellular side of the membrane; the sequence is HVCPNYTNFQFDTSFMYMIAGLCMLKLYQKRHPDINAS. 2 N-linked (GlcNAc...) asparagine glycosylation sites follow: Asn-572 and Asn-603. The chain crosses the membrane as a helical span at residues 606–626; that stretch reads AYSAYACLAIVIFFSVLGVVF. Topologically, residues 627-631 are cytoplasmic; the sequence is GKGNT. Residues 632-652 form a helical membrane-spanning segment; that stretch reads AFWIVFSVIHIISTLLLSTQL. Residues 653-688 lie on the Extracellular side of the membrane; the sequence is YYMGRWKLDSGIFRRILHVLYTDCIRQCSGPLYTDR. The helical transmembrane segment at 689–709 threads the bilayer; the sequence is MVLLVMGNIINWSLAAYGLIM. At 710 to 715 the chain is on the cytoplasmic side; the sequence is RPNDFA. Residues 716-736 form a helical membrane-spanning segment; the sequence is SYLLAIGICNLLLYFAFYIIM. Residues 737-746 lie on the Extracellular side of the membrane; sequence KLRSGERIKL. The helical transmembrane segment at 747 to 767 threads the bilayer; sequence IPLLCIVCTSVVWGFALFFFF. Topologically, residues 768–796 are cytoplasmic; sequence QGLSTWQKTPAESREHNRDCILLDFFDDH. Residues 797–817 traverse the membrane as a helical segment; it reads DIWHFLSSIAMFGSFLVLLTL. At 818-832 the chain is on the extracellular side; sequence DDDLDTVQRDKIYVF.

Belongs to the SID1 family. Interacts with adapter protein complex 1 (AP-1) and AP-2, but not AP-3 and AP-4. Interacts with LAMP2. In terms of processing, glycosylated. Highly expressed in the liver, brain, kidney and intestine (at protein level).

It localises to the lysosome membrane. Its subcellular location is the cell membrane. Mediates the translocation of RNA and DNA across the lysosomal membrane during RNA and DNA autophagy (RDA), a process in which RNA or DNA is directly imported into lysosomes in an ATP-dependent manner, and degraded. Involved in the uptake of single-stranded oligonucleotides by living cells, a process called gymnosis. In vitro, mediates the uptake of linear DNA more efficiently than that of circular DNA, but exhibits similar uptake efficacy toward RNA and DNA. Binds long double-stranded RNA (dsRNA) (500 - 700 base pairs), but not dsRNA shorter than 100 bp. The protein is SID1 transmembrane family member 2 (Sidt2) of Rattus norvegicus (Rat).